Here is a 317-residue protein sequence, read N- to C-terminus: uncharacterized protein (317 aa).

7 helical membrane passes run 24–44 (ISIIVLTTVFIVNYIMSTGIM), 63–83 (LSISSTLACFFSPTVGYSILA), 136–156 (LGVALAKTIIGFLYLSIISED), 187–207 (LIPIMFFMMTLVLYLSKIGFF), 229–249 (ILALTEIMNVQAAIVMAGGFL), 252–272 (GILSSKEVLIGLIIGNVLTFS), and 295–315 (IVMVNAAITLLLDIFIIAGLL).

The protein to M.jannaschii MJ0880, MJ1556 and MJ1589.

It is found in the cell membrane. This is an uncharacterized protein from Methanocaldococcus jannaschii (strain ATCC 43067 / DSM 2661 / JAL-1 / JCM 10045 / NBRC 100440) (Methanococcus jannaschii).